The primary structure comprises 188 residues: Achaete-scute homolog 5 (188 aa).

Positions 80–93 are basic motif; it reads AFIQKRNERERQRV. The region spanning 80-132 is the bHLH domain; it reads AFIQKRNERERQRVKCVNEGYARLRGHLPGALTEKRLSKVETLRAAIRYIKYL. The segment at 94–132 is helix-loop-helix motif; it reads KCVNEGYARLRGHLPGALTEKRLSKVETLRAAIRYIKYL. Residues 139-188 are disordered; that stretch reads TPDGAPPPATSPPPAHTGHSNVPQPSSLVAESSGSPFSSSPFLESEEPSL. Over residues 142–153 the composition is skewed to pro residues; sequence GAPPPATSPPPA. Residues 158–168 show a composition bias toward polar residues; the sequence is SNVPQPSSLVA. Positions 169–181 are enriched in low complexity; that stretch reads ESSGSPFSSSPFL.

As to quaternary structure, interacts with transcription factor TCF3/E12. As to expression, expressed in teeth (at protein level).

The protein localises to the nucleus. In terms of biological role, transcription factor. Probably binds E-box motifs 5'-CANNTG-3' in complex with transcription factor TCF3/E12. Negatively modulates transcription of target genes such as CDH1/E-cadherin, perhaps by recruiting the PRC2 repressive complex to regulatory elements. Regulates ameloblast development and tooth germ growth, perhaps acting by positively modulating migration of inner enamel epithelium (IEE) cells. Plays a role in enamel formation. This Mus musculus (Mouse) protein is Achaete-scute homolog 5.